A 667-amino-acid polypeptide reads, in one-letter code: Protein MAIN-LIKE 2 (667 aa).

An N-acetylmethionine modification is found at M1. The span at 492 to 508 shows a compositional bias: basic residues; sequence MRGKERVRRKGMGKRRK. 2 disordered regions span residues 492 to 523 and 594 to 667; these read MRGK…EDES and KLQE…TVVA. Positions 512 to 523 are enriched in acidic residues; sequence PMEDYGGSEDES. 2 stretches are compositionally biased toward basic and acidic residues: residues 608–618 and 656–667; these read YDVKKEDKESK and SLDRRGENTVVA.

In terms of tissue distribution, expressed in root tips, the shoot apical meristem (SAM), leaves, mature flowers and embryos.

The protein resides in the nucleus. Maybe required to maintain cell division activity in meristematic cells. The sequence is that of Protein MAIN-LIKE 2 from Arabidopsis thaliana (Mouse-ear cress).